The chain runs to 358 residues: NAC domain-containing protein 12 (358 aa).

Residues 16-177 enclose the NAC domain; that stretch reads VPPGFRFHPT…GWVVCRVFRK (162 aa). The DNA-binding element occupies 116–183; sequence IGLRKTLVFY…VFRKKNYQKI (68 aa).

Stems and roots, specifically in interfascicular fibers (sclerenchyma), cells differentiating into vascular vessels (cambium), and xylem.

Its subcellular location is the nucleus. In terms of biological role, transcriptional activator of genes involved in biosynthesis of secondary walls. Together with NST1, required for the secondary cell wall thickening and lignification of sclerenchymatous fibers and secondary xylem vessels (tracheary elements). Seems to repress the secondary cell wall thickening of xylary fibers. May also regulate the secondary cell wall lignification of other tissues. Binds to and activates the promoter of MYB46. This chain is NAC domain-containing protein 12, found in Arabidopsis thaliana (Mouse-ear cress).